We begin with the raw amino-acid sequence, 582 residues long: Aspartate--tRNA ligase (582 aa).

Glu174 provides a ligand contact to L-aspartate. The interval 198–201 (QITK) is aspartate. Residue Arg220 coordinates L-aspartate. ATP contacts are provided by residues 220–222 (RDE) and Gln229. An L-aspartate-binding site is contributed by His443. Glu477 serves as a coordination point for ATP. Arg484 contributes to the L-aspartate binding site. Residue 529–532 (GLDR) coordinates ATP.

The protein belongs to the class-II aminoacyl-tRNA synthetase family. Type 1 subfamily. Homodimer.

The protein localises to the cytoplasm. The enzyme catalyses tRNA(Asp) + L-aspartate + ATP = L-aspartyl-tRNA(Asp) + AMP + diphosphate. Functionally, catalyzes the attachment of L-aspartate to tRNA(Asp) in a two-step reaction: L-aspartate is first activated by ATP to form Asp-AMP and then transferred to the acceptor end of tRNA(Asp). The polypeptide is Aspartate--tRNA ligase (Streptococcus pyogenes serotype M18 (strain MGAS8232)).